A 294-amino-acid polypeptide reads, in one-letter code: uncharacterized protein (294 aa).

The 139-residue stretch at 13–151 (QCSQIRPYLY…LIDLEQKLRG (139 aa)) folds into the Tyrosine-protein phosphatase domain. The active-site Phosphocysteine intermediate is Cys95. Residues 234–294 (PTLLVPSSSS…WRLSFHKDVV (61 aa)) form a disordered region.

Belongs to the protein-tyrosine phosphatase family. Non-receptor class dual specificity subfamily.

This is an uncharacterized protein from Caenorhabditis elegans.